Here is a 296-residue protein sequence, read N- to C-terminus: Probable 6-phosphogluconolactonase 1 (296 aa).

It belongs to the glucosamine/galactosamine-6-phosphate isomerase family. 6-phosphogluconolactonase subfamily.

The catalysed reaction is 6-phospho-D-glucono-1,5-lactone + H2O = 6-phospho-D-gluconate + H(+). Its pathway is carbohydrate degradation; pentose phosphate pathway; D-ribulose 5-phosphate from D-glucose 6-phosphate (oxidative stage): step 2/3. Hydrolysis of 6-phosphogluconolactone to 6-phosphogluconate. The polypeptide is Probable 6-phosphogluconolactonase 1 (Oryza sativa subsp. japonica (Rice)).